Reading from the N-terminus, the 212-residue chain is Ribonuclease HII (212 aa).

Positions 7 to 212 (SQILGIDEAG…TIENITKSTE (206 aa)) constitute an RNase H type-2 domain. A divalent metal cation contacts are provided by D13, E14, and D111.

Belongs to the RNase HII family. Mn(2+) is required as a cofactor. Requires Mg(2+) as cofactor.

It localises to the cytoplasm. It catalyses the reaction Endonucleolytic cleavage to 5'-phosphomonoester.. Its function is as follows. Endonuclease that specifically degrades the RNA of RNA-DNA hybrids. In Methanosphaera stadtmanae (strain ATCC 43021 / DSM 3091 / JCM 11832 / MCB-3), this protein is Ribonuclease HII.